Here is a 176-residue protein sequence, read N- to C-terminus: Telomerase RNA component interacting RNase (176 aa).

Residues Met1–Gly12 show a composition bias toward basic and acidic residues. The interval Met1–Gly121 is disordered. Over residues Ser45 to Val56 the composition is skewed to low complexity. Over residues Leu68–Glu83 the composition is skewed to basic and acidic residues. Over residues Arg90 to Gly101 the composition is skewed to low complexity. Lys146 bears the N6-acetyllysine mark.

In terms of assembly, part of the telomerase RNA 3' end complex which contains about 488 proteins.

Its activity is regulated as follows. Zn(2+) inhibits the RNase activity while Mg(2+), Ca(2+), Mn(2+), K(+), Na(+), EDTA and EGTA show little effect on the exoribonuclease activity. Exoribonuclease that is part of the telomerase RNA 3' end processing complex and which has the ability to cleave all four unpaired RNA nucleotides from the 5' end or 3' end with higher efficiency for purine bases. This Homo sapiens (Human) protein is Telomerase RNA component interacting RNase.